Here is a 135-residue protein sequence, read N- to C-terminus: Large ribosomal subunit protein mL41 (135 aa).

Residues 1–13 (MGVLSALARGFVR) constitute a mitochondrion transit peptide.

It belongs to the mitochondrion-specific ribosomal protein mL41 family. Component of the mitochondrial ribosome large subunit (39S) which comprises a 16S rRNA and about 50 distinct proteins.

It is found in the mitochondrion. In terms of biological role, component of the mitochondrial ribosome large subunit. Also involved in apoptosis and cell cycle. The polypeptide is Large ribosomal subunit protein mL41 (mrpl41) (Danio rerio (Zebrafish)).